We begin with the raw amino-acid sequence, 101 residues long: Urease subunit gamma (101 aa).

Belongs to the urease gamma subunit family. In terms of assembly, heterotrimer of UreA (gamma), UreB (beta) and UreC (alpha) subunits. Three heterotrimers associate to form the active enzyme.

It localises to the cytoplasm. The catalysed reaction is urea + 2 H2O + H(+) = hydrogencarbonate + 2 NH4(+). The protein operates within nitrogen metabolism; urea degradation; CO(2) and NH(3) from urea (urease route): step 1/1. The polypeptide is Urease subunit gamma (Ureaplasma parvum serovar 3 (strain ATCC 27815 / 27 / NCTC 11736)).